A 314-amino-acid polypeptide reads, in one-letter code: D-alanine--D-alanine ligase (314 aa).

An ATP-grasp domain is found at 112-307; that stretch reads KQVWQSLGLP…FQQLVLSILD (196 aa). An ATP-binding site is contributed by 138-193; the sequence is AQMLGFPLIVKPAHEGSSIGMAKVGDVAELIAAWRAASAYDAQVLVEQWIQGPEFT. Mg(2+)-binding residues include Asp-261, Glu-274, and Asn-276.

The protein belongs to the D-alanine--D-alanine ligase family. It depends on Mg(2+) as a cofactor. The cofactor is Mn(2+).

It localises to the cytoplasm. The enzyme catalyses 2 D-alanine + ATP = D-alanyl-D-alanine + ADP + phosphate + H(+). It functions in the pathway cell wall biogenesis; peptidoglycan biosynthesis. Cell wall formation. This Stutzerimonas stutzeri (strain A1501) (Pseudomonas stutzeri) protein is D-alanine--D-alanine ligase.